The primary structure comprises 715 residues: Fatty acid oxidation complex subunit alpha (715 aa).

The segment at Met-1 to Pro-190 is enoyl-CoA hydratase. Positions Gly-306–Asn-715 are 3-hydroxyacyl-CoA dehydrogenase.

The protein in the N-terminal section; belongs to the enoyl-CoA hydratase/isomerase family. This sequence in the central section; belongs to the 3-hydroxyacyl-CoA dehydrogenase family. As to quaternary structure, heterotetramer of two alpha chains (FadJ) and two beta chains (FadI).

It localises to the cytoplasm. The catalysed reaction is a (3S)-3-hydroxyacyl-CoA = a (2E)-enoyl-CoA + H2O. The enzyme catalyses a 4-saturated-(3S)-3-hydroxyacyl-CoA = a (3E)-enoyl-CoA + H2O. It catalyses the reaction a (3S)-3-hydroxyacyl-CoA + NAD(+) = a 3-oxoacyl-CoA + NADH + H(+). It carries out the reaction (3S)-3-hydroxybutanoyl-CoA = (3R)-3-hydroxybutanoyl-CoA. It functions in the pathway lipid metabolism; fatty acid beta-oxidation. In terms of biological role, catalyzes the formation of a hydroxyacyl-CoA by addition of water on enoyl-CoA. Also exhibits 3-hydroxyacyl-CoA epimerase and 3-hydroxyacyl-CoA dehydrogenase activities. This is Fatty acid oxidation complex subunit alpha from Salmonella enteritidis PT4 (strain P125109).